Reading from the N-terminus, the 144-residue chain is Ferredoxin-thioredoxin reductase catalytic chain, chloroplastic (144 aa).

A chloroplast-targeting transit peptide spans 1–31 (MTTQASTFAVAVPSVATPFRRHRNPFVVRAQ). Cys-83 contributes to the [4Fe-4S] cluster binding site. The active-site Nucleophile is Cys-85. Cys-85 and Cys-115 are disulfide-bonded. [4Fe-4S] cluster is bound by residues Cys-102, Cys-104, and Cys-113.

This sequence belongs to the ferredoxin thioredoxin reductase beta subunit family. In terms of assembly, heterodimer of subunit A (variable subunit) and subunit B (catalytic subunit). Heterodimeric FTR forms a complex with ferredoxin and thioredoxin. [4Fe-4S] cluster serves as cofactor.

It localises to the plastid. Its subcellular location is the chloroplast. It catalyses the reaction [thioredoxin]-disulfide + 2 reduced [2Fe-2S]-[ferredoxin] + 2 H(+) = [thioredoxin]-dithiol + 2 oxidized [2Fe-2S]-[ferredoxin]. Functionally, catalytic subunit of the ferredoxin-thioredoxin reductase (FTR), which catalyzes the two-electron reduction of thioredoxins by the electrons provided by reduced ferredoxin. This chain is Ferredoxin-thioredoxin reductase catalytic chain, chloroplastic (FTRC), found in Glycine max (Soybean).